The following is a 220-amino-acid chain: MILSPARTRIKICGLTRPGDVDVAVAAGADAIGLVFYPRSPRHVSLALASDLARRLPPFVTPVGLFVNASPEDVERACEQIPNLLLQFHGDETPAQCEASGRPYLRAARMDPGFDLLNFARSYTSAQAILLDAHVEGYGGGGKVFDWSLIPSDVPRPVVLSGGLNPANVTDGVLRVRPWAVDVSSGVESAKGIKDAVLMRQFCEAVRDADARSIDASSGY.

This sequence belongs to the TrpF family.

The enzyme catalyses N-(5-phospho-beta-D-ribosyl)anthranilate = 1-(2-carboxyphenylamino)-1-deoxy-D-ribulose 5-phosphate. It participates in amino-acid biosynthesis; L-tryptophan biosynthesis; L-tryptophan from chorismate: step 3/5. The chain is N-(5'-phosphoribosyl)anthranilate isomerase from Leptothrix cholodnii (strain ATCC 51168 / LMG 8142 / SP-6) (Leptothrix discophora (strain SP-6)).